Here is a 297-residue protein sequence, read N- to C-terminus: Probable lipid kinase YegS-like (297 aa).

In terms of domain architecture, DAGKc spans 2 to 131 (STFPASLLIL…IDIARVNDKT (130 aa)). ATP is bound by residues T40, 66-72 (GDGTINE), and T93. Residues L213, D216, and L218 each coordinate Mg(2+). Residue E269 is the Proton acceptor of the active site.

Belongs to the diacylglycerol/lipid kinase family. YegS lipid kinase subfamily. It depends on Mg(2+) as a cofactor. Requires Ca(2+) as cofactor.

Its subcellular location is the cytoplasm. In terms of biological role, probably phosphorylates lipids; the in vivo substrate is unknown. This chain is Probable lipid kinase YegS-like, found in Klebsiella pneumoniae (strain 342).